The chain runs to 83 residues: Small ribosomal subunit protein uS17 (83 aa).

The protein belongs to the universal ribosomal protein uS17 family. Part of the 30S ribosomal subunit.

Functionally, one of the primary rRNA binding proteins, it binds specifically to the 5'-end of 16S ribosomal RNA. This Francisella tularensis subsp. tularensis (strain FSC 198) protein is Small ribosomal subunit protein uS17.